Here is a 380-residue protein sequence, read N- to C-terminus: Cytochrome b (380 aa).

Helical transmembrane passes span 34 to 54, 78 to 99, 114 to 134, and 179 to 199; these read FGSL…LLAT, WLIR…YLHI, WNTG…GYVL, and FFAL…IHLT. The heme b site is built by H84 and H98. Residues H183 and H197 each coordinate heme b. H202 contributes to the a ubiquinone binding site. 4 consecutive transmembrane segments (helical) span residues 227–247, 289–309, 321–341, and 348–368; these read LKDI…ALFS, LGGV…PLLH, LSQL…WVGS, and FIII…ILFP.

The protein belongs to the cytochrome b family. In terms of assembly, the cytochrome bc1 complex contains 11 subunits: 3 respiratory subunits (MT-CYB, CYC1 and UQCRFS1), 2 core proteins (UQCRC1 and UQCRC2) and 6 low-molecular weight proteins (UQCRH/QCR6, UQCRB/QCR7, UQCRQ/QCR8, UQCR10/QCR9, UQCR11/QCR10 and a cleavage product of UQCRFS1). This cytochrome bc1 complex then forms a dimer. Heme b is required as a cofactor.

The protein resides in the mitochondrion inner membrane. In terms of biological role, component of the ubiquinol-cytochrome c reductase complex (complex III or cytochrome b-c1 complex) that is part of the mitochondrial respiratory chain. The b-c1 complex mediates electron transfer from ubiquinol to cytochrome c. Contributes to the generation of a proton gradient across the mitochondrial membrane that is then used for ATP synthesis. This Ciconia ciconia (White stork) protein is Cytochrome b (MT-CYB).